Here is a 104-residue protein sequence, read N- to C-terminus: Astakine (104 aa).

The N-terminal stretch at Met-1–Ala-22 is a signal peptide. Cystine bridges form between Cys-25–Cys-38, Cys-32–Cys-50, Cys-37–Cys-76, Cys-60–Cys-84, and Cys-78–Cys-91.

Belongs to the AVIT (prokineticin) family.

The protein resides in the secreted. In terms of biological role, cytokine directly involved in hematopoiesis. The chain is Astakine from Pacifastacus leniusculus (Signal crayfish).